The chain runs to 141 residues: uncharacterized protein (141 aa).

The helical transmembrane segment at 13 to 35 (PVIGVILMVAITVILAAVIASFV) threads the bilayer.

It localises to the membrane. This is an uncharacterized protein from Archaeoglobus fulgidus (strain ATCC 49558 / DSM 4304 / JCM 9628 / NBRC 100126 / VC-16).